Reading from the N-terminus, the 314-residue chain is Methylglutaconyl-CoA hydratase, mitochondrial (314 aa).

The transit peptide at 1-42 (MAAAAPGALGALRTGRVRLVAACCARLGPAAWARGTAPRRGY) directs the protein to the mitochondrion. Lys75 carries the N6-acetyllysine; alternate modification. N6-succinyllysine; alternate is present on Lys75. An RNA-binding region spans residues 80–94 (KNLLKMLSKAVDALK). Residue Lys84 is modified to N6-succinyllysine. An N6-acetyllysine; alternate mark is found at Lys88 and Lys119. 2 positions are modified to N6-succinyllysine; alternate: Lys88 and Lys119. An N6-succinyllysine mark is found at Lys123 and Lys135. N6-acetyllysine; alternate occurs at positions 179 and 186. Lys179 and Lys186 each carry N6-succinyllysine; alternate. At Lys304 the chain carries N6-succinyllysine.

This sequence belongs to the enoyl-CoA hydratase/isomerase family. In terms of assembly, homohexamer. Detected in heart, brain, liver, spleen, skeletal muscle and kidney. Expressed in brain, kidney, liver and spleen tissue (at protein level).

It localises to the mitochondrion. It carries out the reaction (3S)-3-hydroxy-3-methylglutaryl-CoA = 3-methyl-(2E)-glutaconyl-CoA + H2O. The catalysed reaction is (3S)-citramalyl-CoA = itaconyl-CoA + H2O. It catalyses the reaction 3-hydroxyisovaleryl-CoA = 3-methylbut-2-enoyl-CoA + H2O. The enzyme catalyses (S)-3-hydroxyglutaryl-CoA = (2E)-glutaconyl-CoA + H2O. It functions in the pathway amino-acid degradation; L-leucine degradation; (S)-3-hydroxy-3-methylglutaryl-CoA from 3-isovaleryl-CoA: step 3/3. Functionally, catalyzes the fifth step in the leucine degradation pathway, the reversible hydration of 3-methylglutaconyl-CoA (3-MG-CoA) to 3-hydroxy-3-methylglutaryl-CoA (HMG-CoA). Can catalyze the reverse reaction but at a much lower rate in vitro. HMG-CoA is then quickly degraded by another enzyme (such as HMG-CoA lyase) to give acetyl-CoA and acetoacetate. Uses other substrates such as (2E)-glutaconyl-CoA efficiently in vitro, and to a lesser extent 3-methylcrotonyl-CoA (3-methyl-(2E)-butenoyl-CoA), crotonyl-CoA ((2E)-butenoyl-CoA) and 3-hydroxybutanoyl-CoA (the missing carboxylate reduces affinity to the active site). Originally it was identified as an RNA-binding protein as it binds to AU-rich elements (AREs) in vitro. AREs direct rapid RNA degradation and mRNA deadenylation. Might have itaconyl-CoA hydratase activity, converting itaconyl-CoA into citramalyl-CoA in the C5-dicarboxylate catabolism pathway. The C5-dicarboxylate catabolism pathway is required to detoxify itaconate, an antimicrobial metabolite and immunomodulator produced by macrophages during certain infections, that can act as a vitamin B12-poisoning metabolite. This Mus musculus (Mouse) protein is Methylglutaconyl-CoA hydratase, mitochondrial (Auh).